Here is a 381-residue protein sequence, read N- to C-terminus: Arrestin homolog (381 aa).

This sequence belongs to the arrestin family.

This chain is Arrestin homolog, found in Heliothis virescens (Tobacco budworm moth).